The chain runs to 132 residues: Large-conductance mechanosensitive channel (132 aa).

2 helical membrane passes run 10–30 (FAVK…SAFG) and 76–96 (GNFI…FLAI).

This sequence belongs to the MscL family. As to quaternary structure, homopentamer.

It is found in the cell inner membrane. Its function is as follows. Channel that opens in response to stretch forces in the membrane lipid bilayer. May participate in the regulation of osmotic pressure changes within the cell. This is Large-conductance mechanosensitive channel from Campylobacter hominis (strain ATCC BAA-381 / DSM 21671 / CCUG 45161 / LMG 19568 / NCTC 13146 / CH001A).